Here is a 301-residue protein sequence, read N- to C-terminus: 4-hydroxybenzoate octaprenyltransferase (301 aa).

The next 7 helical transmembrane spans lie at 34–54 (IGSL…AGGL), 57–77 (LWTL…GCVI), 108–128 (LWVF…LNWL), 163–183 (WGIP…AWLL), 222–242 (DLIA…LVGL), 248–268 (IAYW…FHIA), and 280–300 (FLHN…SLAL).

It belongs to the UbiA prenyltransferase family. Mg(2+) serves as cofactor.

It localises to the cell inner membrane. The catalysed reaction is all-trans-octaprenyl diphosphate + 4-hydroxybenzoate = 4-hydroxy-3-(all-trans-octaprenyl)benzoate + diphosphate. Its pathway is cofactor biosynthesis; ubiquinone biosynthesis. Catalyzes the prenylation of para-hydroxybenzoate (PHB) with an all-trans polyprenyl group. Mediates the second step in the final reaction sequence of ubiquinone-8 (UQ-8) biosynthesis, which is the condensation of the polyisoprenoid side chain with PHB, generating the first membrane-bound Q intermediate 3-octaprenyl-4-hydroxybenzoate. This Xanthomonas campestris pv. campestris (strain 8004) protein is 4-hydroxybenzoate octaprenyltransferase.